The primary structure comprises 263 residues: L-aspartate dehydrogenase (263 aa).

NAD(+) is bound by residues alanine 120 and asparagine 186. Histidine 216 is a catalytic residue.

It belongs to the L-aspartate dehydrogenase family.

The enzyme catalyses L-aspartate + NADP(+) + H2O = oxaloacetate + NH4(+) + NADPH + H(+). The catalysed reaction is L-aspartate + NAD(+) + H2O = oxaloacetate + NH4(+) + NADH + H(+). It functions in the pathway cofactor biosynthesis; NAD(+) biosynthesis; iminoaspartate from L-aspartate (dehydrogenase route): step 1/1. Specifically catalyzes the NAD or NADP-dependent dehydrogenation of L-aspartate to iminoaspartate. The sequence is that of L-aspartate dehydrogenase from Acinetobacter baumannii (strain AB307-0294).